Reading from the N-terminus, the 377-residue chain is tRNA-specific 2-thiouridylase MnmA (377 aa).

Residues Gly-12–Ser-19 and Met-38 each bind ATP. The interaction with target base in tRNA stretch occupies residues Asn-98–Asp-100. Cys-103 (nucleophile) is an active-site residue. A disulfide bridge links Cys-103 with Cys-200. Position 127 (Gly-127) interacts with ATP. The interaction with tRNA stretch occupies residues Lys-150–Gln-152. Cys-200 serves as the catalytic Cysteine persulfide intermediate. Residues Arg-313–Tyr-314 form an interaction with tRNA region.

The protein belongs to the MnmA/TRMU family.

It is found in the cytoplasm. It carries out the reaction S-sulfanyl-L-cysteinyl-[protein] + uridine(34) in tRNA + AH2 + ATP = 2-thiouridine(34) in tRNA + L-cysteinyl-[protein] + A + AMP + diphosphate + H(+). Catalyzes the 2-thiolation of uridine at the wobble position (U34) of tRNA, leading to the formation of s(2)U34. In Pediococcus pentosaceus (strain ATCC 25745 / CCUG 21536 / LMG 10740 / 183-1w), this protein is tRNA-specific 2-thiouridylase MnmA.